The chain runs to 702 residues: Acetylcholinesterase (702 aa).

A signal peptide spans 1–36 (MEIRGLITRLLGPCHLRHLILCSLGLYSILVQSVHC). Positions 107–134 (HIHSTTTRRRGLTRRESSSDATDSDPLV) are disordered. N-linked (GlcNAc...) asparagine glycosylation occurs at Asn-187. Cys-195 and Cys-222 are joined by a disulfide. Ser-327 acts as the Acyl-ester intermediate in catalysis. Residues Cys-381 and Cys-394 are joined by a disulfide bond. Residues Glu-453 and His-567 each act as charge relay system in the active site. A disulfide bridge connects residues Cys-529 and Cys-650. Asn-637 is a glycosylation site (N-linked (GlcNAc...) asparagine).

This sequence belongs to the type-B carboxylesterase/lipase family.

Its subcellular location is the synapse. The protein resides in the secreted. The protein localises to the cell membrane. The catalysed reaction is acetylcholine + H2O = choline + acetate + H(+). Functionally, rapidly hydrolyzes choline released into the synapse. The polypeptide is Acetylcholinesterase (ACHE1) (Culex pipiens (House mosquito)).